We begin with the raw amino-acid sequence, 302 residues long: NAD kinase 2 (302 aa).

Residue D78 is the Proton acceptor of the active site. Residues 78-79, 152-153, D182, 193-198, and A217 each bind NAD(+); these read DG, NE, and TAYALS.

The protein belongs to the NAD kinase family. A divalent metal cation is required as a cofactor.

It localises to the cytoplasm. The catalysed reaction is NAD(+) + ATP = ADP + NADP(+) + H(+). Involved in the regulation of the intracellular balance of NAD and NADP, and is a key enzyme in the biosynthesis of NADP. Catalyzes specifically the phosphorylation on 2'-hydroxyl of the adenosine moiety of NAD to yield NADP. The sequence is that of NAD kinase 2 from Prochlorococcus marinus (strain MIT 9313).